The primary structure comprises 238 residues: Probable transcriptional regulatory protein MGAS2096_Spy0287 (238 aa).

Belongs to the TACO1 family. YeeN subfamily.

Its subcellular location is the cytoplasm. The chain is Probable transcriptional regulatory protein MGAS2096_Spy0287 from Streptococcus pyogenes serotype M12 (strain MGAS2096).